The sequence spans 248 residues: Triosephosphate isomerase (248 aa).

2 residues coordinate substrate: asparagine 11 and lysine 13. The Electrophile role is filled by histidine 95. The active-site Proton acceptor is the glutamate 165.

Belongs to the triosephosphate isomerase family. In terms of assembly, homodimer.

The protein resides in the cytoplasm. The catalysed reaction is dihydroxyacetone phosphate = methylglyoxal + phosphate. The enzyme catalyses D-glyceraldehyde 3-phosphate = dihydroxyacetone phosphate. Its pathway is carbohydrate degradation; glycolysis; D-glyceraldehyde 3-phosphate from glycerone phosphate: step 1/1. The protein operates within carbohydrate biosynthesis; gluconeogenesis. Functionally, triosephosphate isomerase is an extremely efficient metabolic enzyme that catalyzes the interconversion between dihydroxyacetone phosphate (DHAP) and D-glyceraldehyde-3-phosphate (G3P) in glycolysis and gluconeogenesis. It is also responsible for the non-negligible production of methylglyoxal a reactive cytotoxic side-product that modifies and can alter proteins, DNA and lipids. This is Triosephosphate isomerase (tpi1) from Xenopus tropicalis (Western clawed frog).